Here is a 317-residue protein sequence, read N- to C-terminus: Peptidyl-prolyl cis-trans isomerase CYP26-2, chloroplastic (317 aa).

The segment at 1-37 is disordered; sequence MMQPNAKLLSPSAKFLPSPIEPPQHNRRTTVGAPPSL. One can recognise a PPIase cyclophilin-type domain in the interval 95 to 311; sequence FIDVSIDGEP…SKVVVTNCGL (217 aa).

The protein belongs to the cyclophilin-type PPIase family. As to expression, ubiquitous. Lower levels of expression in roots.

It localises to the plastid. The protein resides in the chloroplast thylakoid. It catalyses the reaction [protein]-peptidylproline (omega=180) = [protein]-peptidylproline (omega=0). PPIases accelerate the folding of proteins. It catalyzes the cis-trans isomerization of proline imidic peptide bonds in oligopeptides. The chain is Peptidyl-prolyl cis-trans isomerase CYP26-2, chloroplastic (CYP26-2) from Arabidopsis thaliana (Mouse-ear cress).